An 896-amino-acid polypeptide reads, in one-letter code: NET1-associated nuclear protein 1 (896 aa).

4 WD repeats span residues 295–334 (WHIDSVLSLSFSHDGSYLLSGGWEKVMSLWQLETNSQQFL), 490–542 (LQDP…TNWN), 552–595 (GISV…SNWC), and 605–645 (NHFS…ESLE).

Interacts with snoRNA U3. Interacts with MPP10. Component of the ribosomal small subunit (SSU) processome composed of at least 40 protein subunits and snoRNA U3. In the absence of snoRNA3, forms a complex with other t-UTPs. This complex can associate with pre-18S ribosomal RNAs.

The protein localises to the nucleus. It is found in the nucleolus. In terms of biological role, involved in nucleolar processing of pre-18S ribosomal RNA. Required for optimal pre-ribosomal RNA transcription by RNA polymerase I together with a subset of U3 proteins required for transcription (t-UTPs). The protein is NET1-associated nuclear protein 1 (NAN1) of Saccharomyces cerevisiae (strain ATCC 204508 / S288c) (Baker's yeast).